Here is a 332-residue protein sequence, read N- to C-terminus: Delta-aminolevulinic acid dehydratase (332 aa).

Residue Lys-199 is the Schiff-base intermediate with substrate of the active site. Positions 209 and 221 each coordinate 5-aminolevulinate. Glu-237 contributes to the Mg(2+) binding site. Lys-252 serves as the catalytic Schiff-base intermediate with substrate. 5-aminolevulinate contacts are provided by Ser-278 and Tyr-317.

This sequence belongs to the ALAD family. In terms of assembly, homooctamer.

It catalyses the reaction 2 5-aminolevulinate = porphobilinogen + 2 H2O + H(+). It participates in porphyrin-containing compound metabolism; protoporphyrin-IX biosynthesis; coproporphyrinogen-III from 5-aminolevulinate: step 1/4. In terms of biological role, catalyzes an early step in the biosynthesis of tetrapyrroles. Binds two molecules of 5-aminolevulinate per subunit, each at a distinct site, and catalyzes their condensation to form porphobilinogen. In Chlamydia pneumoniae (Chlamydophila pneumoniae), this protein is Delta-aminolevulinic acid dehydratase (hemB).